The primary structure comprises 188 residues: Small ribosomal subunit protein uS7 (188 aa).

The protein belongs to the universal ribosomal protein uS7 family. As to quaternary structure, part of the 30S ribosomal subunit.

Its function is as follows. One of the primary rRNA binding proteins, it binds directly to 16S rRNA where it nucleates assembly of the head domain of the 30S subunit. Is located at the subunit interface close to the decoding center. This chain is Small ribosomal subunit protein uS7, found in Methanococcus maripaludis (strain C7 / ATCC BAA-1331).